The following is a 245-amino-acid chain: Lytic switch protein BZLF1 (245 aa).

The transactivation stretch occupies residues 1-167 (MMDPNSTSED…RTRKPQQPES (167 aa)). 2 positions are modified to phosphothreonine; by host: Thr-14 and Thr-159. Residues 157-194 (RRTRKPQQPESLEECDSELEIKRYKNRVASRKCRAKFK) carry the Bipartite nuclear localization signal motif. 3 positions are modified to phosphoserine; by host: Ser-167, Ser-173, and Ser-186. The bZIP domain occupies 170 to 228 (ECDSELEIKRYKNRVASRKCRAKFKQLLQHYREVAAAKSSENDRLRLLLKQMCPSLDVD). The basic motif stretch occupies residues 178 to 195 (KRYKNRVASRKCRAKFKQ). A leucine-zipper region spans residues 196–228 (LLQHYREVAAAKSSENDRLRLLLKQMCPSLDVD). The interval 229-245 (SIIPRTPDVLHEDLLNF) is accessory activation domain.

It belongs to the bZIP family. Homodimer. Interacts (via b-ZIP domain) with the DNA polymerase processivity factor BMRF1 (via N-terminus); this interaction may inhibit BZLF1-induced transcription of the BMRF1 promoter. Interacts with human UBN1, CRTC2 and RACK1. Interacts (via N-terminus) with human PAX5 (via N-terminus); this interaction inhibits BZLF1-mediated lytic viral reactivation. Interacts (via leucine-zipper domain) with host CEBPA; this interaction induces G1 host cell cycle arrest. Interacts (via C-terminus) with host TP53BP1 (via C-terminus); this interaction is involved in the activation of the viral lytic cycle. Interacts with host chromatin-remodeling ATPase INO80; this interaction participates to the activation of early lytic viral genes by BZLF1. Interacts with host regulator of chromatin SMARCA5/hSNF2H; this interaction participates to the activation of early lytic viral genes by BZLF1. Interacts with host PLSCR1/Phospholipid scramblase 1; this interaction negatively regulates the transcriptional regulatory activity of BZLF1 by preventing the formation of the BZLF1-CBP complex.

The protein localises to the host nucleus. Its function is as follows. Transcription factor that acts as a molecular switch to induce the transition from the latent to the lytic or productive phase of the virus cycle. Mediates the switch from the latent to the lytic cycle of infection in cells containing a highly methylated viral genome. Probably binds to silenced chromatin and recruits host chromatin-remodeling enzymes. Regulates this switch by binding to 2 types of ZEBRA response elements (ZREs): the CpG-free AP-1 like elements (latency) and the methylated CpG-containing elements (lytic replication). Activates preferentially the methylated forms of the viral lytic R (BRLF1) and Na (BRRF1) gene promoters, the latters being the first genes activated during Z-mediated reactivation in latently infected cells. BZLF1 and BRLF1 act together to trigger lytic replication. Also binds the lytic origin of replication, oriLyt. Induces G1 cell cycle arrest by stabilizing the host CCAAT/enhancer binding protein CEBPA. This function is important because the lytic cycle preferentially takes place in host cells arrested in G1. In Epstein-Barr virus (strain B95-8) (HHV-4), this protein is Lytic switch protein BZLF1.